The primary structure comprises 550 residues: Glucose-6-phosphate isomerase (550 aa).

D-glucose 6-phosphate is bound by residues 163 to 164 (GS), 214 to 219 (SKTFTT), Q358, E362, H393, and K515. The active-site Proton donor is the E362. Residues H393 and K515 contribute to the active site.

It belongs to the GPI family. Homodimer.

The protein resides in the cytoplasm. The catalysed reaction is alpha-D-glucose 6-phosphate = beta-D-fructose 6-phosphate. It functions in the pathway carbohydrate degradation; glycolysis; D-glyceraldehyde 3-phosphate and glycerone phosphate from D-glucose: step 2/4. In terms of biological role, in the cytoplasm, catalyzes the conversion of glucose-6-phosphate to fructose-6-phosphate, the second step in glycolysis, and the reverse reaction during gluconeogenesis. The polypeptide is Glucose-6-phosphate isomerase (PGI1) (Candida albicans (strain SC5314 / ATCC MYA-2876) (Yeast)).